The following is a 384-amino-acid chain: DNA replication and repair protein RecF (384 aa).

43-50 (GENGSGKT) contacts ATP.

The protein belongs to the RecF family.

It is found in the cytoplasm. Functionally, the RecF protein is involved in DNA metabolism; it is required for DNA replication and normal SOS inducibility. RecF binds preferentially to single-stranded, linear DNA. It also seems to bind ATP. This is DNA replication and repair protein RecF from Brucella suis biovar 1 (strain 1330).